Reading from the N-terminus, the 379-residue chain is Homoserine O-succinyltransferase (379 aa).

Positions 51–360 constitute an AB hydrolase-1 domain; that stretch reads NAVLICHALS…DSPYGHDAFL (310 aa). The Nucleophile role is filled by serine 157. Residue arginine 227 participates in substrate binding. Catalysis depends on residues aspartate 323 and histidine 356. Aspartate 357 is a binding site for substrate.

Belongs to the AB hydrolase superfamily. MetX family. In terms of assembly, homodimer.

The protein localises to the cytoplasm. It carries out the reaction L-homoserine + succinyl-CoA = O-succinyl-L-homoserine + CoA. It functions in the pathway amino-acid biosynthesis; L-methionine biosynthesis via de novo pathway; O-succinyl-L-homoserine from L-homoserine: step 1/1. Functionally, transfers a succinyl group from succinyl-CoA to L-homoserine, forming succinyl-L-homoserine. The chain is Homoserine O-succinyltransferase from Pseudomonas putida (strain ATCC 700007 / DSM 6899 / JCM 31910 / BCRC 17059 / LMG 24140 / F1).